The chain runs to 227 residues: Cytochrome c oxidase subunit 2 (227 aa).

At 1–14 (MAYPLQLGFQDATS) the chain is on the mitochondrial intermembrane side. Residues 15–45 (PIMEELLHFHDHTLMIVFLISSLVLYIISLM) form a helical membrane-spanning segment. Over 46-59 (LTTKLTHTSTMDAQ) the chain is Mitochondrial matrix. A helical membrane pass occupies residues 60 to 87 (EVETIWTILPAIILILIALPSLRILYMM). At 88-227 (DEINNPSLTI…HFEKWSTSML (140 aa)) the chain is on the mitochondrial intermembrane side. Cu cation contacts are provided by histidine 161, cysteine 196, glutamate 198, cysteine 200, histidine 204, and methionine 207. Glutamate 198 is a Mg(2+) binding site.

Belongs to the cytochrome c oxidase subunit 2 family. In terms of assembly, component of the cytochrome c oxidase (complex IV, CIV), a multisubunit enzyme composed of 14 subunits. The complex is composed of a catalytic core of 3 subunits MT-CO1, MT-CO2 and MT-CO3, encoded in the mitochondrial DNA, and 11 supernumerary subunits COX4I, COX5A, COX5B, COX6A, COX6B, COX6C, COX7A, COX7B, COX7C, COX8 and NDUFA4, which are encoded in the nuclear genome. The complex exists as a monomer or a dimer and forms supercomplexes (SCs) in the inner mitochondrial membrane with NADH-ubiquinone oxidoreductase (complex I, CI) and ubiquinol-cytochrome c oxidoreductase (cytochrome b-c1 complex, complex III, CIII), resulting in different assemblies (supercomplex SCI(1)III(2)IV(1) and megacomplex MCI(2)III(2)IV(2)). Found in a complex with TMEM177, COA6, COX18, COX20, SCO1 and SCO2. Interacts with TMEM177 in a COX20-dependent manner. Interacts with COX20. Interacts with COX16. Cu cation serves as cofactor.

The protein resides in the mitochondrion inner membrane. It catalyses the reaction 4 Fe(II)-[cytochrome c] + O2 + 8 H(+)(in) = 4 Fe(III)-[cytochrome c] + 2 H2O + 4 H(+)(out). Functionally, component of the cytochrome c oxidase, the last enzyme in the mitochondrial electron transport chain which drives oxidative phosphorylation. The respiratory chain contains 3 multisubunit complexes succinate dehydrogenase (complex II, CII), ubiquinol-cytochrome c oxidoreductase (cytochrome b-c1 complex, complex III, CIII) and cytochrome c oxidase (complex IV, CIV), that cooperate to transfer electrons derived from NADH and succinate to molecular oxygen, creating an electrochemical gradient over the inner membrane that drives transmembrane transport and the ATP synthase. Cytochrome c oxidase is the component of the respiratory chain that catalyzes the reduction of oxygen to water. Electrons originating from reduced cytochrome c in the intermembrane space (IMS) are transferred via the dinuclear copper A center (CU(A)) of subunit 2 and heme A of subunit 1 to the active site in subunit 1, a binuclear center (BNC) formed by heme A3 and copper B (CU(B)). The BNC reduces molecular oxygen to 2 water molecules using 4 electrons from cytochrome c in the IMS and 4 protons from the mitochondrial matrix. This is Cytochrome c oxidase subunit 2 (MT-CO2) from Rhinoceros unicornis (Greater Indian rhinoceros).